The chain runs to 257 residues: UPF0246 protein Mpe_A2092 (257 aa).

This sequence belongs to the UPF0246 family.

The polypeptide is UPF0246 protein Mpe_A2092 (Methylibium petroleiphilum (strain ATCC BAA-1232 / LMG 22953 / PM1)).